The sequence spans 121 residues: Large ribosomal subunit protein bL12 (121 aa).

Belongs to the bacterial ribosomal protein bL12 family. In terms of assembly, homodimer. Part of the ribosomal stalk of the 50S ribosomal subunit. Forms a multimeric L10(L12)X complex, where L10 forms an elongated spine to which 2 to 4 L12 dimers bind in a sequential fashion. Binds GTP-bound translation factors.

Its function is as follows. Forms part of the ribosomal stalk which helps the ribosome interact with GTP-bound translation factors. Is thus essential for accurate translation. The sequence is that of Large ribosomal subunit protein bL12 from Halalkalibacterium halodurans (strain ATCC BAA-125 / DSM 18197 / FERM 7344 / JCM 9153 / C-125) (Bacillus halodurans).